The chain runs to 872 residues: Bifunctional heparan sulfate N-deacetylase/N-sulfotransferase 4 (872 aa).

The Cytoplasmic segment spans residues 1–13 (MNLILKFRRSFRT). The helical; Signal-anchor for type II membrane protein transmembrane segment at 14 to 34 (LIVLLATFCLVSILISAYFLY) threads the bilayer. The Lumenal segment spans residues 35–872 (SGYKQEMTLI…WLRQELQKVR (838 aa)). Positions 36-588 (GYKQEMTLIE…KRHKDIWSRE (553 aa)) are heparan sulfate N-deacetylase 4. Residues N226, N341, and N391 are each glycosylated (N-linked (GlcNAc...) asparagine). Positions 589–872 (KTCDHLPKFL…WLRQELQKVR (284 aa)) are heparan sulfate N-sulfotransferase 4. The active-site For sulfotransferase activity is the K604. Residue 604–608 (KTGTT) participates in 3'-phosphoadenylyl sulfate binding. An N-linked (GlcNAc...) asparagine glycan is attached at N657. S702 lines the 3'-phosphoadenylyl sulfate pocket. A glycan (N-linked (GlcNAc...) asparagine) is linked at N793. A disulfide bond links C808 and C818. 823-827 (KGRKY) contacts 3'-phosphoadenylyl sulfate.

The protein belongs to the sulfotransferase 1 family. NDST subfamily. Monomer. In terms of tissue distribution, expressed at low level in brain and throughout embryogenesis. Not expressed in other tissues.

It is found in the golgi apparatus membrane. It catalyses the reaction alpha-D-glucosaminyl-[heparan sulfate](n) + 3'-phosphoadenylyl sulfate = N-sulfo-alpha-D-glucosaminyl-[heparan sulfate](n) + adenosine 3',5'-bisphosphate + 2 H(+). It functions in the pathway glycan metabolism; heparan sulfate biosynthesis. The protein operates within glycan metabolism; heparin biosynthesis. Essential bifunctional enzyme that catalyzes both the N-deacetylation and the N-sulfation of glucosamine (GlcNAc) of the glycosaminoglycan in heparan sulfate. Modifies the GlcNAc-GlcA disaccharide repeating sugar backbone to make N-sulfated heparosan, a prerequisite substrate for later modifications in heparin biosynthesis. Has low deacetylase activity but high sulfotransferase activity. The protein is Bifunctional heparan sulfate N-deacetylase/N-sulfotransferase 4 (Ndst4) of Mus musculus (Mouse).